We begin with the raw amino-acid sequence, 838 residues long: Protein kintoun (838 aa).

Disordered stretches follow at residues 106 to 125, 212 to 238, 370 to 411, 557 to 696, and 776 to 838; these read RPKNEVATDPSSGSRGLNWS, NPTAEEQEPHPLAHMFPTKPPAPGKPE, LRHF…TSSP, NAPL…DSCS, and QQRR…EMDD. Positions 114 to 125 are enriched in polar residues; that stretch reads DPSSGSRGLNWS. Residues 370-380 are compositionally biased toward basic and acidic residues; the sequence is LRHFSREDSGV. Ser-378 bears the Phosphoserine mark. Over residues 389-398 the composition is skewed to acidic residues; it reads PVEEDPDGEL. The segment covering 557–572 has biased composition (basic and acidic residues); the sequence is NAPLDVEFERNQEGHA. The span at 583–592 shows a compositional bias: acidic residues; it reads EEEEEEEDKE. The span at 601-611 shows a compositional bias: low complexity; it reads DQQQQQQVQNK. Composition is skewed to basic residues over residues 612–623 and 673–683; these read KSGKKQRKRNKK and RSHRGILKRFS. The residue at position 781 (Ser-781) is a Phosphoserine. Residues 789–802 are compositionally biased toward basic and acidic residues; it reads EETRGSALKQKENP.

This sequence belongs to the PIH1 family. Kintoun subfamily. In terms of assembly, interacts with Pp1alpha-96A, Pp1-87B, Pp1-13C and flw.

The protein localises to the cytoplasm. Functionally, required for cytoplasmic pre-assembly of axonemal dyneins, thereby playing a central role in motility in cilia and flagella. Involved in pre-assembly of dynein arm complexes in the cytoplasm before intraflagellar transport loads them for the ciliary compartment. This chain is Protein kintoun, found in Drosophila sechellia (Fruit fly).